The chain runs to 556 residues: 2-succinyl-5-enolpyruvyl-6-hydroxy-3-cyclohexene-1-carboxylate synthase (556 aa).

Belongs to the TPP enzyme family. MenD subfamily. In terms of assembly, homodimer. Mg(2+) is required as a cofactor. It depends on Mn(2+) as a cofactor. Requires thiamine diphosphate as cofactor.

It carries out the reaction isochorismate + 2-oxoglutarate + H(+) = 5-enolpyruvoyl-6-hydroxy-2-succinyl-cyclohex-3-ene-1-carboxylate + CO2. It functions in the pathway quinol/quinone metabolism; 1,4-dihydroxy-2-naphthoate biosynthesis; 1,4-dihydroxy-2-naphthoate from chorismate: step 2/7. It participates in quinol/quinone metabolism; menaquinone biosynthesis. Functionally, catalyzes the thiamine diphosphate-dependent decarboxylation of 2-oxoglutarate and the subsequent addition of the resulting succinic semialdehyde-thiamine pyrophosphate anion to isochorismate to yield 2-succinyl-5-enolpyruvyl-6-hydroxy-3-cyclohexene-1-carboxylate (SEPHCHC). In Shigella boydii serotype 18 (strain CDC 3083-94 / BS512), this protein is 2-succinyl-5-enolpyruvyl-6-hydroxy-3-cyclohexene-1-carboxylate synthase.